Reading from the N-terminus, the 92-residue chain is Small ribosomal subunit protein uS15 (92 aa).

Belongs to the universal ribosomal protein uS15 family. In terms of assembly, part of the 30S ribosomal subunit. Forms a bridge to the 50S subunit in the 70S ribosome, contacting the 23S rRNA.

In terms of biological role, one of the primary rRNA binding proteins, it binds directly to 16S rRNA where it helps nucleate assembly of the platform of the 30S subunit by binding and bridging several RNA helices of the 16S rRNA. Forms an intersubunit bridge (bridge B4) with the 23S rRNA of the 50S subunit in the ribosome. The sequence is that of Small ribosomal subunit protein uS15 from Symbiobacterium thermophilum (strain DSM 24528 / JCM 14929 / IAM 14863 / T).